We begin with the raw amino-acid sequence, 476 residues long: Serine/threonine-protein kinase WAG1 (476 aa).

The Protein kinase domain maps to 93 to 400; it reads FKLVRHLGTG…AQDIKRHEFF (308 aa). ATP is bound by residues 99–107 and K124; that span reads LGTGNLGRV. D219 (proton acceptor) is an active-site residue.

Belongs to the protein kinase superfamily. Ser/Thr protein kinase family. In terms of tissue distribution, expressed in root tips and lateral root primordia.

The protein localises to the cytoplasm. It localises to the cytosol. The catalysed reaction is L-seryl-[protein] + ATP = O-phospho-L-seryl-[protein] + ADP + H(+). It catalyses the reaction L-threonyl-[protein] + ATP = O-phospho-L-threonyl-[protein] + ADP + H(+). Functionally, serine/threonine-protein kinase involved in the regulation of auxin signaling. Acts as a positive regulator of cellular auxin efflux and regulates organ development by enhancing PIN-mediated polar auxin transport. Phosphorylates conserved serine residues in the PIN auxin efflux carriers. Phosphorylation of PIN proteins is required and sufficient for apical-basal PIN polarity that enables directional intercellular auxin fluxes, which mediate differential growth, tissue patterning and organogenesis. Acts as a suppressor of root waving. The sequence is that of Serine/threonine-protein kinase WAG1 (WAG1) from Arabidopsis thaliana (Mouse-ear cress).